We begin with the raw amino-acid sequence, 5251 residues long: Dynein heavy chain-like protein 2 (5251 aa).

Kelch repeat units follow at residues 37-87 (GLFL…CYHN), 95-143 (YVII…LQNG), 266-317 (SLIL…IHGN), 318-367 (NLFI…LVES), and 372-421 (IIFI…QNNE). Residues 140–188 (LQNGINGTNEKGYISQTDDENCSDNKYGENQDYGSNDSDSKDGEDIDKD) are disordered. The tract at residues 686-732 (NNIEQRNNNNDNNDNNNNDNNNNNNNDNNNNNNNNNNNNNNNNDNLN) is disordered. Low complexity predominate over residues 692–730 (NNNNDNNDNNNNDNNNNNNNDNNNNNNNNNNNNNNNNDN). 2 coiled-coil regions span residues 1155–1225 (DNII…KKIK) and 1544–1610 (KLNN…KLIS). Residues 1554–1598 (EKNKNANENSNEIETNKYNKKEELTNNRDGDGDDDDNIKNDKDEK) form a disordered region. Residues 1567 to 1583 (ETNKYNKKEELTNNRDG) show a composition bias toward basic and acidic residues. A Kelch 6 repeat occupies 1639-1685 (HIKYTLKYYITNLFRLKDLFNNEKEKWIDENYLAQVFILCNTIFFVN). Residues 1802-1825 (HQEGKQEYNNKNNDNDNNNNNNNN) form a disordered region. Positions 1810 to 1825 (NNKNNDNDNNNNNNNN) are enriched in low complexity. Residue 1895 to 1902 (GPAGTGKT) coordinates ATP. Residues 2136 to 2188 (NDINENKKEKDNIEELKSDNVKEEKKTKKKHLEDNNNNKKKELFNLNNIEKEL) adopt a coiled-coil conformation. The segment at 2152–2171 (KSDNVKEEKKTKKKHLEDNN) is disordered. 2224–2231 (GEAGCGKT) is a binding site for ATP. A Kelch 7 repeat occupies 2447 to 2494 (VIWCFGGFLGEKDNVNYKKSFDKYWKNTFKSIKVNRKISVFDFYVENN). Residues 2546–2553 (GKTGVGKT) and 2890–2897 (GIGGCGKT) contribute to the ATP site. Composition is skewed to low complexity over residues 3138 to 3154 (DNNN…DGNN) and 3652 to 3671 (DQNF…NSTN). 6 disordered regions span residues 3138–3163 (DNNN…EGND), 3652–3686 (DQNF…NHNN), 4042–4250 (EDND…EENV), 4280–4299 (NGKI…DFEN), 4773–4824 (MDFH…ENEE), and 4910–4948 (KIIK…HSGS). Residues 4059–4086 (KMEDEEKMEEEKVDEEKMEEEKVDEEKM) are compositionally biased toward acidic residues. The span at 4087-4247 (EDEKVEEKME…EKGEEQKAEE (161 aa)) shows a compositional bias: basic and acidic residues. 2 stretches are compositionally biased toward acidic residues: residues 4289 to 4299 (DDLEEEEDFEN) and 4807 to 4823 (DDDD…EENE). Over residues 4912-4937 (IKKEKPGDNKDNKYTHDQKKETIHKE) the composition is skewed to basic and acidic residues.

This sequence belongs to the dynein heavy chain family. Consists of at least two heavy chains and a number of intermediate and light chains.

It localises to the cytoplasm. Its subcellular location is the cytoskeleton. Acts as a motor for the intracellular retrograde motility of vesicles and organelles along microtubules. Dynein has ATPase activity; the force-producing power stroke is thought to occur on release of ADP. This chain is Dynein heavy chain-like protein 2, found in Plasmodium falciparum (isolate 3D7).